A 611-amino-acid polypeptide reads, in one-letter code: MCGIVGAVAERNITAILIEGLKRLEYRGYDSAGLAVLTQNGELQRRRRIGKVSELEVAVADDPLAGQLGIAHTRWATHGAPTEGNAHPHFSGNDVAVVHNGIIENHEELREELKGLGYVFTSQTDTEVIVHLIHHTLKSIPDLTDALKAAVKRLHGAYGLALISAKQPDRLVAARSGSPLVIGLGLGENFLASDQLALRQVTDRFMYLEEGDIAEIRRDQVSIWDQQGNKVQRETVQYHEGAEAADKGAYRHFMLKEIHEQPSVVQRTLEGRLGKDNVLVQAFGPQAADLFAKVRNVQIVACGTSYHAGMVARYWLESLAGIPCQVEVASEFRYRKVVVQPDTLFVSISQSGETADTLAALRNAKELGFLGSLAICNVGISSLVRESDLTLLTLAGPEIGVASTKAFTTQLVSLMLLTLALGQVRGTLEAGVEAELVEELRRLPTRLGEALAMDATVEKIAELFADKHHTLFLGRGAQYPVAMEGALKLKEISYIHAEAYPAGELKHGPLALVDNDMPVVTVAPNNELLEKLKSNLQEVRARGGELVVFADEHAGMTNGEGTHVIKVPHIADALAPILYTIPLQLLSYYVAVLKGTDVDQPRNLAKSVTVE.

C2 (nucleophile; for GATase activity) is an active-site residue. Positions 2–219 (CGIVGAVAER…EGDIAEIRRD (218 aa)) constitute a Glutamine amidotransferase type-2 domain. 2 SIS domains span residues 287 to 427 (AADL…VRGT) and 460 to 601 (IAEL…VDQP). K606 acts as the For Fru-6P isomerization activity in catalysis.

In terms of assembly, homodimer.

It is found in the cytoplasm. It catalyses the reaction D-fructose 6-phosphate + L-glutamine = D-glucosamine 6-phosphate + L-glutamate. Catalyzes the first step in hexosamine metabolism, converting fructose-6P into glucosamine-6P using glutamine as a nitrogen source. The chain is Glutamine--fructose-6-phosphate aminotransferase [isomerizing] from Pseudomonas putida (strain ATCC 47054 / DSM 6125 / CFBP 8728 / NCIMB 11950 / KT2440).